Here is a 610-residue protein sequence, read N- to C-terminus: MEQPINVLNDFHPLNEAGKILIKHPSLAERKDEDGIHWIKSQWDGKWYPEKFSDYLRLHKIVKIPNNSDKPELFQTYKDKNNKRSRYMGLPNLKRANIKTQWTREMVEEWKKCRDDIVYFAETYCAITHIDYGVIKVQLRDYQRDMLKIMSSKRMTVCNLSRQLGKTTVVAIFLAHFVCFNKDKAVGILAHKGSMSAEVLDRTKQAIELLPDFLQPGIVEWNKGSIELDNGSSIGAYASSPDAVRGNSFAMIYIDECAFIPNFHDSWLAIQPVISSGRRSKIIITTTPNGLNHFYDIWTAAVEGKSGFEPYTAIWNSVKERLYNDEDIFDDGWQWSIQTINGSSLAQFRQEHTAAFEGTSGTLISGMKLAVMDFIEVTPDDHGFHQFKKPEPDRKYIATLDCSEGRGQDYHALHIIDVTDDVWEQVGVLHSNTISHLILPDIVMRYLVEYNECPVYIELNSTGVSVAKSLYMDLEYEGVICDSYTDLGMKQTKRTKAVGCSTLKDLIEKDKLIIHHRATIQEFRTFSEKGVSWAAEEGYHDDLVMSLVIFGWLSTQSKFIDYADKDDMRLASEVFSKELQDMSDDYAPVIFVDSVHSAEYVPVSHGMSMV.

Residues 30–94 (RKDEDGIHWI…SRYMGLPNLK (65 aa)) form a ssDNA-binding region. Residues 131–301 (DYGVIKVQLR…NHFYDIWTAA (171 aa)) form an ATPase activity region. Glutamine 138 and glutamine 143 together coordinate ATP. The short motif at 161 to 167 (SRQLGKT) is the Walker A motif element. Arginine 202 serves as a coordination point for ATP. A Walker B motif motif is present at residues 251–256 (MIYIDE). Catalysis depends on glutamate 256, which acts as the For ATPase activity. The ATPase coupling signature appears at 285–287 (TTT). A binding to the portal protein region spans residues 328–352 (IFDDGWQWSIQTINGSSLAQFRQEH). Residues 360 to 559 (SGTLISGMKL…FGWLSTQSKF (200 aa)) are nuclease activity. Residues aspartate 401, glutamate 458, and aspartate 542 each coordinate Mg(2+).

This sequence belongs to the Tequatrovirus large terminase family. Interacts with the terminase small subunit; the active complex is composed of a pentamer of terminase large subunits and a dodecamer of terminase small subunits. Interacts with the portal protein. Interacts with the RNA polymerase sigma factor gp55. It depends on Mg(2+) as a cofactor. Phosphorylated.

With respect to regulation, stimulated up to 50 to 100-fold by the terminase small subunit. Modestly activated by portal protein and single-stranded binding protein gp32 multimers. Its function is as follows. The terminase large subunit acts as an ATP driven molecular motor necessary for viral DNA translocation into empty capsids and as an endonuclease that cuts the viral genome to initiate and to end a packaging reaction. The terminase lies at a unique vertex of the procapsid and is composed of two subunits, a small terminase subunit involved in viral DNA recognition (packaging sequence), and a large terminase subunit possessing endonucleolytic and ATPase activities. Both terminase subunits heterooligomerize and are docked on the portal protein to form the packaging machine. The terminase large subunit exhibits endonuclease activity and cleaves the viral genome concatemer once the capsid is full (headful packaging). Once the capsid is packaged with the DNA, the terminase complex is substituted by the tail. The protein is Terminase, large subunit (17) of Escherichia coli (Bacteriophage T4).